Consider the following 116-residue polypeptide: Iron-sulfur cluster insertion protein ErpA (116 aa).

Iron-sulfur cluster-binding residues include Cys44, Cys108, and Cys110.

It belongs to the HesB/IscA family. In terms of assembly, homodimer. Requires iron-sulfur cluster as cofactor.

Its function is as follows. Required for insertion of 4Fe-4S clusters for at least IspG. This Shewanella amazonensis (strain ATCC BAA-1098 / SB2B) protein is Iron-sulfur cluster insertion protein ErpA.